Here is a 398-residue protein sequence, read N- to C-terminus: Homeobox protein knotted-1-like 1 (398 aa).

Disordered stretches follow at residues 20 to 61 (SPIS…HHHQ), 78 to 102 (NCFRSDHDQPNNNNNPSVKSEASSS), and 241 to 273 (LNNPDGKSDNMGSSDEEQENNSGGETELPEIDP). A compositionally biased stretch (low complexity) spans 23–56 (SSSNKNDNTSDTNNNNNNNNSSNYGPGYNNTNNN). Residues 87-102 (PNNNNNPSVKSEASSS) are compositionally biased toward polar residues. The ELK domain maps to 279 to 299 (ELKNHLLKKYSGYLSSLKQEL). The segment at residues 300 to 363 (SKKKKKGKLP…NQRKRHWKPS (64 aa)) is a DNA-binding region (homeobox; TALE-type).

The protein belongs to the TALE/KNOX homeobox family. May form heterodimeric complex with the TALE/BELL proteins BEL1, BLH2, BLH8/PNF and BLH9/PNY. Interacts with OFP1, OFP2, OFP4, OFP6 and OFP12. Interacts with CCT7 and CCT8. Interacts with KNATM-B. Binds to AGO10/PNH. Interacts with BZIP30. Expressed in the vegetative meristem. Present in the base of flower primordia.

It localises to the nucleus. Its function is as follows. May play a role in meristem function, and may be involved in maintaining cells in an undifferentiated, meristematic state, and its expression disappears at the same time the shoot apex undergoes the transition from vegetative to reproductive development. Positive regulator of LATERAL ORGAN BOUNDARIES (LOB). Probably binds to the DNA sequence 5'-TGAC-3'. Able to traffic from the L1 to the L2/L3 layers of the meristem, presumably through plasmodesmata. The sequence is that of Homeobox protein knotted-1-like 1 (KNAT1) from Arabidopsis thaliana (Mouse-ear cress).